A 513-amino-acid polypeptide reads, in one-letter code: ATP synthase subunit alpha (513 aa).

169–176 (GDRQTGKT) contacts ATP.

It belongs to the ATPase alpha/beta chains family. In terms of assembly, F-type ATPases have 2 components, CF(1) - the catalytic core - and CF(0) - the membrane proton channel. CF(1) has five subunits: alpha(3), beta(3), gamma(1), delta(1), epsilon(1). CF(0) has three main subunits: a(1), b(2) and c(9-12). The alpha and beta chains form an alternating ring which encloses part of the gamma chain. CF(1) is attached to CF(0) by a central stalk formed by the gamma and epsilon chains, while a peripheral stalk is formed by the delta and b chains.

Its subcellular location is the cell inner membrane. It carries out the reaction ATP + H2O + 4 H(+)(in) = ADP + phosphate + 5 H(+)(out). In terms of biological role, produces ATP from ADP in the presence of a proton gradient across the membrane. The alpha chain is a regulatory subunit. This chain is ATP synthase subunit alpha, found in Glaesserella parasuis serovar 5 (strain SH0165) (Haemophilus parasuis).